A 114-amino-acid polypeptide reads, in one-letter code: Fluoride-specific ion channel FluC 1 (114 aa).

A run of 4 helical transmembrane segments spans residues 3-23 (IDIK…GALF), 30-50 (IFIV…LNIL), 55-75 (LTLC…MSHL), and 87-107 (FLLN…LGHI). Positions 63 and 66 each coordinate Na(+).

Belongs to the fluoride channel Fluc/FEX (TC 1.A.43) family.

It localises to the cell inner membrane. It catalyses the reaction fluoride(in) = fluoride(out). Na(+) is not transported, but it plays an essential structural role and its presence is essential for fluoride channel function. Its function is as follows. Fluoride-specific ion channel. Important for reducing fluoride concentration in the cell, thus reducing its toxicity. The sequence is that of Fluoride-specific ion channel FluC 1 from Prochlorococcus marinus (strain NATL2A).